A 203-amino-acid polypeptide reads, in one-letter code: Protein-L-isoaspartate O-methyltransferase (203 aa).

Serine 50 is an active-site residue.

Belongs to the methyltransferase superfamily. L-isoaspartyl/D-aspartyl protein methyltransferase family.

The protein resides in the cytoplasm. The enzyme catalyses [protein]-L-isoaspartate + S-adenosyl-L-methionine = [protein]-L-isoaspartate alpha-methyl ester + S-adenosyl-L-homocysteine. In terms of biological role, catalyzes the methyl esterification of L-isoaspartyl residues in peptides and proteins that result from spontaneous decomposition of normal L-aspartyl and L-asparaginyl residues. It plays a role in the repair and/or degradation of damaged proteins. In Methanococcoides burtonii (strain DSM 6242 / NBRC 107633 / OCM 468 / ACE-M), this protein is Protein-L-isoaspartate O-methyltransferase.